Consider the following 249-residue polypeptide: Tumor necrosis factor ligand superfamily member 12 (249 aa).

The Cytoplasmic portion of the chain corresponds to 1-21; the sequence is MAARRSQRRRGRRGEPGTALL. A helical; Signal-anchor for type II membrane protein transmembrane segment spans residues 22-42; the sequence is VPLALGLGLALACLGLLLAVV. Over 43 to 249 the chain is Extracellular; the sequence is SLGSRASLSA…LTYFGLFQVH (207 aa). The segment at 55-85 is disordered; it reads PAQEELVAEEDQDPSELNPQTEESQDPAPFL. Residues 56-68 are compositionally biased toward acidic residues; the sequence is AQEELVAEEDQDP. A THD domain is found at 107 to 248; the sequence is IAAHYEVHPR…FLTYFGLFQV (142 aa). A glycan (N-linked (GlcNAc...) asparagine) is linked at Asn-139. Cys-191 and Cys-210 are joined by a disulfide.

It belongs to the tumor necrosis factor family. As to quaternary structure, homotrimer. Interacts with the angiogenic factor AGGF1/VG5Q. The soluble form derives from the membrane form by proteolytic processing. Highly expressed in adult heart, pancreas, skeletal muscle, brain, colon, small intestine, lung, ovary, prostate, spleen, lymph node, appendix and peripheral blood lymphocytes. Low expression in kidney, testis, liver, placenta, thymus and bone marrow. Also detected in fetal kidney, liver, lung and brain.

The protein resides in the cell membrane. It is found in the secreted. In terms of biological role, binds to FN14 and possibly also to TNRFSF12/APO3. Weak inducer of apoptosis in some cell types. Mediates NF-kappa-B activation. Promotes angiogenesis and the proliferation of endothelial cells. Also involved in induction of inflammatory cytokines. Promotes IL8 secretion. The chain is Tumor necrosis factor ligand superfamily member 12 (TNFSF12) from Homo sapiens (Human).